The primary structure comprises 309 residues: uncharacterized protein (309 aa).

A compositionally biased stretch (basic residues) spans M1 to T16. A disordered region spans residues M1 to V70. G261, I281, and L290 together coordinate S-adenosyl-L-methionine.

It belongs to the class IV-like SAM-binding methyltransferase superfamily. RNA methyltransferase TrmH family.

This is an uncharacterized protein from Mycobacterium avium (strain 104).